The following is an 865-amino-acid chain: Protein translocase subunit SecA (865 aa).

ATP is bound by residues Gln-93, Gly-111–Thr-115, and Asp-501. Residues Cys-841, Cys-843, Cys-852, and Cys-853 each contribute to the Zn(2+) site.

This sequence belongs to the SecA family. In terms of assembly, monomer and homodimer. Part of the essential Sec protein translocation apparatus which comprises SecA, SecYEG and auxiliary proteins SecDF-YajC and YidC. It depends on Zn(2+) as a cofactor.

It is found in the cell inner membrane. The protein localises to the cytoplasm. The enzyme catalyses ATP + H2O + cellular proteinSide 1 = ADP + phosphate + cellular proteinSide 2.. Its function is as follows. Part of the Sec protein translocase complex. Interacts with the SecYEG preprotein conducting channel. Has a central role in coupling the hydrolysis of ATP to the transfer of proteins into and across the cell membrane, serving as an ATP-driven molecular motor driving the stepwise translocation of polypeptide chains across the membrane. The protein is Protein translocase subunit SecA of Helicobacter pylori (strain ATCC 700392 / 26695) (Campylobacter pylori).